The chain runs to 111 residues: Nucleoid-associated protein LBA0378 (111 aa).

Belongs to the YbaB/EbfC family. Homodimer.

The protein localises to the cytoplasm. It is found in the nucleoid. In terms of biological role, binds to DNA and alters its conformation. May be involved in regulation of gene expression, nucleoid organization and DNA protection. The protein is Nucleoid-associated protein LBA0378 of Lactobacillus acidophilus (strain ATCC 700396 / NCK56 / N2 / NCFM).